We begin with the raw amino-acid sequence, 259 residues long: 5'-nucleotidase SurE 1 (259 aa).

A divalent metal cation contacts are provided by Asp16, Asp17, Ser48, and Asn101.

It belongs to the SurE nucleotidase family. A divalent metal cation serves as cofactor.

It localises to the cytoplasm. It carries out the reaction a ribonucleoside 5'-phosphate + H2O = a ribonucleoside + phosphate. In terms of biological role, nucleotidase that shows phosphatase activity on nucleoside 5'-monophosphates. The polypeptide is 5'-nucleotidase SurE 1 (Burkholderia lata (strain ATCC 17760 / DSM 23089 / LMG 22485 / NCIMB 9086 / R18194 / 383)).